The sequence spans 296 residues: MFKSGFVTIVGRPNVGKSTLLNAIMKEKLSIVSCRPQTTRNNIQTILTEDNYQLVFVDTPGIHKPKHKLGEYMVKSASDAMKDVDLVLFLINPDEKPGRGDLFIIEQLKEVKVPVFLVLNKIDENPQEKVAETLKTYSELMEFEEIIPISALKGKNIDLLKELMFKYIPEGPQYYPEDMIIDQNERFIVAEIVREKALRLLSEEVPHGIAVEILQMKKNEKGTYHIEGNILCEKNSHKPIIIGKGGSKLKKISQYARQDIEAFLQSKVYIRLWVKVKEEWRDNQSLLKELGYKKMK.

Positions 3-170 (KSGFVTIVGR…KELMFKYIPE (168 aa)) constitute an Era-type G domain. The interval 11 to 18 (GRPNVGKS) is G1. 11–18 (GRPNVGKS) contributes to the GTP binding site. The G2 stretch occupies residues 37-41 (QTTRN). Residues 58–61 (DTPG) are G3. GTP is bound by residues 58-62 (DTPGI) and 120-123 (NKID). The tract at residues 120-123 (NKID) is G4. Residues 149 to 151 (ISA) are G5. The region spanning 201–278 (LSEEVPHGIA…YIRLWVKVKE (78 aa)) is the KH type-2 domain.

It belongs to the TRAFAC class TrmE-Era-EngA-EngB-Septin-like GTPase superfamily. Era GTPase family. As to quaternary structure, monomer.

Its subcellular location is the cytoplasm. It localises to the cell membrane. Its function is as follows. An essential GTPase that binds both GDP and GTP, with rapid nucleotide exchange. Plays a role in 16S rRNA processing and 30S ribosomal subunit biogenesis and possibly also in cell cycle regulation and energy metabolism. This Clostridium botulinum (strain Okra / Type B1) protein is GTPase Era.